A 645-amino-acid polypeptide reads, in one-letter code: 1-deoxy-D-xylulose-5-phosphate synthase 1 (645 aa).

Residues 1–20 (MTDTKTPTLDRVAGPADLRS) are disordered. Thiamine diphosphate-binding positions include histidine 78 and 119–121 (AHS). A Mg(2+)-binding site is contributed by aspartate 150. Residues 151–152 (GS), asparagine 179, tyrosine 291, and glutamate 373 contribute to the thiamine diphosphate site. Asparagine 179 provides a ligand contact to Mg(2+).

This sequence belongs to the transketolase family. DXPS subfamily. Homodimer. It depends on Mg(2+) as a cofactor. Thiamine diphosphate serves as cofactor.

The enzyme catalyses D-glyceraldehyde 3-phosphate + pyruvate + H(+) = 1-deoxy-D-xylulose 5-phosphate + CO2. The protein operates within metabolic intermediate biosynthesis; 1-deoxy-D-xylulose 5-phosphate biosynthesis; 1-deoxy-D-xylulose 5-phosphate from D-glyceraldehyde 3-phosphate and pyruvate: step 1/1. Its function is as follows. Catalyzes the acyloin condensation reaction between C atoms 2 and 3 of pyruvate and glyceraldehyde 3-phosphate to yield 1-deoxy-D-xylulose-5-phosphate (DXP). This chain is 1-deoxy-D-xylulose-5-phosphate synthase 1, found in Roseobacter denitrificans (strain ATCC 33942 / OCh 114) (Erythrobacter sp. (strain OCh 114)).